Here is a 1025-residue protein sequence, read N- to C-terminus: RNA cytidine acetyltransferase (1025 aa).

287-296 (GRGKSAALGL) provides a ligand contact to ATP. Position 426 is an N6-acetyllysine (Lys426). Position 470 (Arg470) interacts with ATP. The N-acetyltransferase domain maps to 558 to 753 (CLLPPVPPTQ…HSCIMLKTLT (196 aa)). Residues 629–631 (IAV) and 636–642 (QGMGYGS) contribute to the acetyl-CoA site. Residues 702–1025 (PAERLDYLGV…KKDMKLKRKK (324 aa)) are required for localization to the nucleolus and midbody. Residue Thr716 is modified to Phosphothreonine. Residue Arg725 participates in acetyl-CoA binding. Ser934, Ser984, and Ser987 each carry phosphoserine. The segment at 990–1025 (SDKKRKLEAKQEPKQSKKLKNRETKNKKDMKLKRKK) is disordered. A compositionally biased stretch (basic and acidic residues) spans 997–1018 (EAKQEPKQSKKLKNRETKNKKD).

It belongs to the RNA cytidine acetyltransferase family. NAT10 subfamily. Part of the small subunit (SSU) processome, composed of more than 70 proteins and the RNA chaperone small nucleolar RNA (snoRNA) U3. Interacts with THUMPD1. Interacts with SUN1 (via N-terminus). Interacts with TERT. In terms of processing, acetylation at Lys-426 is required to activation of rRNA transcription. May be autoacetylated; however ability to autoacetylate in vivo requires additional evidences.

It localises to the nucleus. The protein localises to the nucleolus. Its subcellular location is the midbody. The enzyme catalyses a cytidine in 18S rRNA + acetyl-CoA + ATP + H2O = an N(4)-acetylcytidine in 18S rRNA + ADP + phosphate + CoA + H(+). The catalysed reaction is a cytidine in tRNA + acetyl-CoA + ATP + H2O = an N(4)-acetylcytidine in tRNA + ADP + phosphate + CoA + H(+). It carries out the reaction a cytidine in mRNA + acetyl-CoA + ATP + H2O = an N(4)-acetylcytidine in mRNA + ADP + phosphate + CoA + H(+). With respect to regulation, specifically inhibited by remodelin (4-[2-(2-cyclopentylidenehydrazinyl)-4-thiazolyl]-benzonitrile, monohydrobromide), a hydrobromide salt molecule. Remodelin can improve nuclear architecture, chromatin organization and fitness of cells from patients suffering from Hutchinson-Gilford progeria syndrome (HGPS); molecular mechanisms explaining the relation between NAT10 activity and nuclear architecture are however unclear. RNA cytidine acetyltransferase that catalyzes the formation of N(4)-acetylcytidine (ac4C) modification on mRNAs, 18S rRNA and tRNAs. Catalyzes ac4C modification of a broad range of mRNAs, enhancing mRNA stability and translation. mRNA ac4C modification is frequently present within wobble cytidine sites and promotes translation efficiency. Mediates the formation of ac4C at position 1842 in 18S rRNA. May also catalyze the formation of ac4C at position 1337 in 18S rRNA. Required for early nucleolar cleavages of precursor rRNA at sites A0, A1 and A2 during 18S rRNA synthesis. Catalyzes the formation of ac4C in serine and leucine tRNAs. Requires the tRNA-binding adapter protein THUMPD1 for full tRNA acetyltransferase activity but not for 18S rRNA acetylation. In addition to RNA acetyltransferase activity, also able to acetylate lysine residues of proteins, such as histones, microtubules, p53/TP53 and MDM2, in vitro. The relevance of the protein lysine acetyltransferase activity is however unsure in vivo. Activates telomerase activity by stimulating the transcription of TERT, and may also regulate telomerase function by affecting the balance of telomerase subunit assembly, disassembly, and localization. Involved in the regulation of centrosome duplication by acetylating CENATAC during mitosis, promoting SASS6 proteasome degradation. Part of the small subunit (SSU) processome, first precursor of the small eukaryotic ribosomal subunit. During the assembly of the SSU processome in the nucleolus, many ribosome biogenesis factors, an RNA chaperone and ribosomal proteins associate with the nascent pre-rRNA and work in concert to generate RNA folding, modifications, rearrangements and cleavage as well as targeted degradation of pre-ribosomal RNA by the RNA exosome. The sequence is that of RNA cytidine acetyltransferase from Homo sapiens (Human).